A 201-amino-acid chain; its full sequence is MTTTVGIVAKDGVVLATDKRVTAGYYIAHKAGEKIWKIDDHVAATMSGGVADLQSVLSFLSLRAREYRVEHKRPIPIRALVNYVSLLLFYSRPYIYLVHSIVGGVDAEEGPVLYMVDWLGTVTKEKYIATGSGSPYAKGALEVAYREDLTIDEAVELAIRAVKAAIRNDPGSGEGIDVVTITKSDGFRRVFTTQQKIIIPE.

Residue Met1 is a propeptide, removed in mature form; by autocatalysis. The active-site Nucleophile is Thr2.

This sequence belongs to the peptidase T1B family. The 20S proteasome core is composed of 14 alpha and 14 beta subunits that assemble into four stacked heptameric rings, resulting in a barrel-shaped structure. The two inner rings, each composed of seven catalytic beta subunits, are sandwiched by two outer rings, each composed of seven alpha subunits. The catalytic chamber with the active sites is on the inside of the barrel. Has a gated structure, the ends of the cylinder being occluded by the N-termini of the alpha-subunits. Is capped at one or both ends by the proteasome regulatory ATPase, PAN.

The protein resides in the cytoplasm. The enzyme catalyses Cleavage of peptide bonds with very broad specificity.. The formation of the proteasomal ATPase PAN-20S proteasome complex, via the docking of the C-termini of PAN into the intersubunit pockets in the alpha-rings, triggers opening of the gate for substrate entry. Interconversion between the open-gate and close-gate conformations leads to a dynamic regulation of the 20S proteasome proteolysis activity. In terms of biological role, component of the proteasome core, a large protease complex with broad specificity involved in protein degradation. The polypeptide is Proteasome subunit beta 1 (Pyrobaculum calidifontis (strain DSM 21063 / JCM 11548 / VA1)).